A 90-amino-acid chain; its full sequence is MDNIGCKVIVSGIVQAVGFRYFTCREARLHYVMGHAKNLQCGDVEVVMYGPREQIAKMLKWLEKGPKTARVTGITVSEIPYQKTNDFIAC.

The 86-residue stretch at 5 to 90 (GCKVIVSGIV…YQKTNDFIAC (86 aa)) folds into the Acylphosphatase-like domain. Residues arginine 20 and asparagine 38 contribute to the active site.

It belongs to the acylphosphatase family.

The catalysed reaction is an acyl phosphate + H2O = a carboxylate + phosphate + H(+). The sequence is that of Acylphosphatase (acyP) from Psychromonas ingrahamii (strain DSM 17664 / CCUG 51855 / 37).